Reading from the N-terminus, the 498-residue chain is Phosphoethanolamine N-methyltransferase 1 (498 aa).

The S-adenosyl-L-homocysteine site is built by Gly-68, Arg-73, Asp-89, Asp-115, Val-116, and Asn-134. The phosphocholine site is built by Ser-167, Ser-172, Gly-173, Arg-177, and Tyr-184. N-methylethanolamine phosphate-binding positions include 253–254 (QY) and Tyr-262. Position 262 (Tyr-262) interacts with phosphocholine. Residues Val-271, Ser-272, Gly-298, Asp-320, Asp-346, Cys-347, and Arg-363 each contribute to the S-adenosyl-L-homocysteine site. Positions 394, 408, 412, 414, and 480 each coordinate phosphocholine. N-methylethanolamine phosphate contacts are provided by residues Tyr-394, Tyr-408, 412 to 414 (RGY), and Lys-480.

The protein belongs to the class I-like SAM-binding methyltransferase superfamily. PEAMT family.

The catalysed reaction is phosphoethanolamine + S-adenosyl-L-methionine = N-methylethanolamine phosphate + S-adenosyl-L-homocysteine + H(+). It carries out the reaction N-methylethanolamine phosphate + S-adenosyl-L-methionine = N,N-dimethylethanolamine phosphate + S-adenosyl-L-homocysteine + H(+). The enzyme catalyses N,N-dimethylethanolamine phosphate + S-adenosyl-L-methionine = phosphocholine + S-adenosyl-L-homocysteine + H(+). The protein operates within phospholipid metabolism; phosphatidylcholine biosynthesis; phosphocholine from phosphoethanolamine: step 1/1. Its activity is regulated as follows. Inhibited by phosphatidic acid. In terms of biological role, involved in phosphocholine biosynthesis. Catalyzes the N-methylation of phosphoethanolamine, phosphomonomethylethanolamine and phosphodimethylethanolamine, the three methylation steps required to convert phosphoethanolamine to phosphocholine (PC). This is Phosphoethanolamine N-methyltransferase 1 from Triticum aestivum (Wheat).